Reading from the N-terminus, the 395-residue chain is HORMA domain-containing protein 1 (395 aa).

The region spanning 24-226 (QQSLVLVKRL…TPFHTFKVKV (203 aa)) is the HORMA domain. The segment at 329–395 (DVSESKTRSG…RKFSEPKEYV (67 aa)) is disordered. Residues 344 to 353 (KMANGNQPVK) are compositionally biased toward polar residues. Over residues 354-363 (SSKENRKRNQ) the composition is skewed to basic and acidic residues. Ser377 is subject to Phosphoserine. Residues 384–387 (KRRK) carry the Nuclear localization signal motif.

Interacts with HORMAD2. Interacts with IHO1. In terms of processing, phosphorylated at Ser-378 in a SPO11-dependent manner.

Its subcellular location is the nucleus. The protein resides in the chromosome. In terms of biological role, plays a key role in meiotic progression. Regulates 3 different functions during meiosis: ensures that sufficient numbers of processed DNA double-strand breaks (DSBs) are available for successful homology search by increasing the steady-state numbers of single-stranded DSB ends. Promotes synaptonemal-complex formation independently of its role in homology search. Plays a key role in the male mid-pachytene checkpoint and the female meiotic prophase checkpoint: required for efficient build-up of ATR activity on unsynapsed chromosome regions, a process believed to form the basis of meiotic silencing of unsynapsed chromatin (MSUC) and meiotic prophase quality control in both sexes. The sequence is that of HORMA domain-containing protein 1 (HORMAD1) from Canis lupus familiaris (Dog).